We begin with the raw amino-acid sequence, 991 residues long: Mediator of RNA polymerase II transcription subunit 5 (991 aa).

The protein belongs to the Mediator complex subunit 5 family. Component of the Mediator complex.

The protein resides in the nucleus. In terms of biological role, component of the Mediator complex, a coactivator involved in the regulated transcription of nearly all RNA polymerase II-dependent genes. Mediator functions as a bridge to convey information from gene-specific regulatory proteins to the basal RNA polymerase II transcription machinery. Mediator is recruited to promoters by direct interactions with regulatory proteins and serves as a scaffold for the assembly of a functional preinitiation complex with RNA polymerase II and the general transcription factors. This is Mediator of RNA polymerase II transcription subunit 5 (NUT1) from Yarrowia lipolytica (strain CLIB 122 / E 150) (Yeast).